The sequence spans 110 residues: Small ribosomal subunit protein bS16 (110 aa).

The interval 84–110 is disordered; it reads KREARNNPEKAVPRKERKAAAEAAAKK.

This sequence belongs to the bacterial ribosomal protein bS16 family.

This chain is Small ribosomal subunit protein bS16, found in Rhodopseudomonas palustris (strain BisB18).